The following is a 385-amino-acid chain: 1-deoxy-D-xylulose 5-phosphate reductoisomerase (385 aa).

Residues serine 10, glycine 11, serine 12, isoleucine 13, glycine 36, asparagine 38, and asparagine 124 each contribute to the NADPH site. Lysine 125 is a 1-deoxy-D-xylulose 5-phosphate binding site. Glutamate 126 provides a ligand contact to NADPH. Aspartate 150 is a Mn(2+) binding site. The 1-deoxy-D-xylulose 5-phosphate site is built by serine 151, glutamate 152, serine 176, and histidine 198. Mn(2+) is bound at residue glutamate 152. Glycine 204 serves as a coordination point for NADPH. Residues serine 211, asparagine 216, lysine 217, and glutamate 220 each contribute to the 1-deoxy-D-xylulose 5-phosphate site. Residue glutamate 220 coordinates Mn(2+).

It belongs to the DXR family. It depends on Mg(2+) as a cofactor. Mn(2+) serves as cofactor.

The catalysed reaction is 2-C-methyl-D-erythritol 4-phosphate + NADP(+) = 1-deoxy-D-xylulose 5-phosphate + NADPH + H(+). The protein operates within isoprenoid biosynthesis; isopentenyl diphosphate biosynthesis via DXP pathway; isopentenyl diphosphate from 1-deoxy-D-xylulose 5-phosphate: step 1/6. Its function is as follows. Catalyzes the NADPH-dependent rearrangement and reduction of 1-deoxy-D-xylulose-5-phosphate (DXP) to 2-C-methyl-D-erythritol 4-phosphate (MEP). The polypeptide is 1-deoxy-D-xylulose 5-phosphate reductoisomerase (Endomicrobium trichonymphae).